The sequence spans 410 residues: Elongation factor Tu, chloroplastic (410 aa).

The tr-type G domain occupies 10 to 214; the sequence is KPHVNIGTIG…NVDEYIPTPE (205 aa). A G1 region spans residues 19–26; it reads GHVDHGKT. 19-26 contacts GTP; sequence GHVDHGKT. Threonine 26 is a Mg(2+) binding site. Residues 60-64 form a G2 region; sequence GITIN. A G3 region spans residues 81-84; sequence DCPG. GTP is bound by residues 81-85 and 136-139; these read DCPGH and NKED. The tract at residues 136 to 139 is G4; sequence NKED. The interval 174-176 is G5; the sequence is SAL.

The protein belongs to the TRAFAC class translation factor GTPase superfamily. Classic translation factor GTPase family. EF-Tu/EF-1A subfamily.

Its subcellular location is the plastid. It is found in the chloroplast stroma. The catalysed reaction is GTP + H2O = GDP + phosphate + H(+). In terms of biological role, GTP hydrolase that promotes the GTP-dependent binding of aminoacyl-tRNA to the A-site of ribosomes during protein biosynthesis. The protein is Elongation factor Tu, chloroplastic (tufA) of Bigelowiella natans (Pedinomonas minutissima).